We begin with the raw amino-acid sequence, 134 residues long: Thionin-2.1 (134 aa).

Residues Met-1 to Ala-24 form the signal peptide. Intrachain disulfides connect Cys-27-Cys-61, Cys-28-Cys-55, and Cys-40-Cys-49. Positions Ala-68–Leu-134 are cleaved as a propeptide — acidic domain.

The protein belongs to the plant thionin (TC 1.C.44) family. As to expression, detected in rosette leaves and at a very high level in flowers and in siliques.

It localises to the secreted. Its function is as follows. Seems to function as a defense factor. Thionins are small plant proteins which are toxic to animal cells. They seem to exert their toxic effect at the level of the cell membrane. Their precise function is not known. In Arabidopsis thaliana (Mouse-ear cress), this protein is Thionin-2.1 (THI2.1).